Reading from the N-terminus, the 88-residue chain is Cytochrome c oxidase subunit 6B2 (88 aa).

The segment at 1 to 22 is disordered; that stretch reads MLDVEAQEPPKGKWSTPPFDPR. In terms of domain architecture, CHCH spans 29-75; it reads IRNCYQNFLDYHRCLKTRTRRGKSTQPCEYYFRVYHSLCPISWVESW. Residues 32–42 carry the Cx9C motif motif; the sequence is CYQNFLDYHRC. 2 disulfides stabilise this stretch: C32-C67 and C42-C56. A Cx10C motif motif is present at residues 56-67; that stretch reads CEYYFRVYHSLC.

It belongs to the cytochrome c oxidase subunit 6B family. As to quaternary structure, component of the cytochrome c oxidase (complex IV, CIV), a multisubunit enzyme composed of 14 subunits. The complex is composed of a catalytic core of 3 subunits MT-CO1, MT-CO2 and MT-CO3, encoded in the mitochondrial DNA, and 11 supernumerary subunits COX4I1 (or COX4I2), COX5A, COX5B, COX6A1 (or COX6A2), COX6B1 (or COX6B2), COX6C, COX7A2 (or COX7A1), COX7B, COX7C, COX8A and NDUFA4, which are encoded in the nuclear genome. The complex exists as a monomer or a dimer and forms supercomplexes (SCs) in the inner mitochondrial membrane with NADH-ubiquinone oxidoreductase (complex I, CI) and ubiquinol-cytochrome c oxidoreductase (cytochrome b-c1 complex, complex III, CIII), resulting in different assemblies (supercomplex SCI(1)III(2)IV(1) and megacomplex MCI(2)III(2)IV(2)). As to expression, testis specific. Weak expression in thymus and heart. Expressed in cancer cell lines.

It localises to the mitochondrion inner membrane. It functions in the pathway energy metabolism; oxidative phosphorylation. In terms of biological role, component of the cytochrome c oxidase, the last enzyme in the mitochondrial electron transport chain which drives oxidative phosphorylation. The respiratory chain contains 3 multisubunit complexes succinate dehydrogenase (complex II, CII), ubiquinol-cytochrome c oxidoreductase (cytochrome b-c1 complex, complex III, CIII) and cytochrome c oxidase (complex IV, CIV), that cooperate to transfer electrons derived from NADH and succinate to molecular oxygen, creating an electrochemical gradient over the inner membrane that drives transmembrane transport and the ATP synthase. Cytochrome c oxidase is the component of the respiratory chain that catalyzes the reduction of oxygen to water. Electrons originating from reduced cytochrome c in the intermembrane space (IMS) are transferred via the dinuclear copper A center (CU(A)) of subunit 2 and heme A of subunit 1 to the active site in subunit 1, a binuclear center (BNC) formed by heme A3 and copper B (CU(B)). The BNC reduces molecular oxygen to 2 water molecules using 4 electrons from cytochrome c in the IMS and 4 protons from the mitochondrial matrix. This is Cytochrome c oxidase subunit 6B2 (COX6B2) from Homo sapiens (Human).